The chain runs to 303 residues: Sterol-4-alpha-carboxylate 3-dehydrogenase ERG26, decarboxylating (303 aa).

NADP(+)-binding positions include 8-9 (SL) and 30-32 (TAS). Serine 71 is a substrate binding site. Positions 77–96 (PTQEPTSEENAHRYDENNAP) are disordered. NADP(+) is bound by residues tyrosine 102, lysine 106, and 128-131 (IPGI). Tyrosine 102 contributes to the substrate binding site. Residue lysine 106 is the Proton donor of the active site.

It belongs to the 3-beta-HSD family. Heterotetramer of ERG25, ERG26, ERG27 and ERG28. ERG28 acts as a scaffold to tether ERG27 and other 4,4-demethylation-related enzymes, forming a demethylation enzyme complex, in the endoplasmic reticulum.

The protein localises to the endoplasmic reticulum membrane. It participates in steroid metabolism; ergosterol biosynthesis. Sterol-4-alpha-carboxylate 3-dehydrogenase; part of the third module of ergosterol biosynthesis pathway that includes the late steps of the pathway. ERG26 is a catalytic component of the C-4 demethylation complex that catalyzes the conversion of 4,4-dimethylfecosterol into fecosterol via 4-methylfecosterol. The third module or late pathway involves the ergosterol synthesis itself through consecutive reactions that mainly occur in the endoplasmic reticulum (ER) membrane. Firstly, the squalene synthase ERG9 catalyzes the condensation of 2 farnesyl pyrophosphate moieties to form squalene, which is the precursor of all steroids. Squalene synthase is crucial for balancing the incorporation of farnesyl diphosphate (FPP) into sterol and nonsterol isoprene synthesis. Secondly, squalene is converted into lanosterol by the consecutive action of the squalene epoxidase ERG1 and the lanosterol synthase ERG7. Then, the delta(24)-sterol C-methyltransferase ERG6 methylates lanosterol at C-24 to produce eburicol. Eburicol is the substrate of the sterol 14-alpha demethylase encoded by CYP51A, CYP51B and CYP51C, to yield 4,4,24-trimethyl ergosta-8,14,24(28)-trienol. CYP51B encodes the enzyme primarily responsible for sterol 14-alpha-demethylation, and plays an essential role in ascospore formation. CYP51A encodes an additional sterol 14-alpha-demethylase, induced on ergosterol depletion and responsible for the intrinsic variation in azole sensitivity. The third CYP51 isoform, CYP51C, does not encode a sterol 14-alpha-demethylase, but is required for full virulence on host wheat ears. The C-14 reductase ERG24 then reduces the C14=C15 double bond which leads to 4,4-dimethylfecosterol. A sequence of further demethylations at C-4, involving the C-4 demethylation complex containing the C-4 methylsterol oxidases ERG25, the sterol-4-alpha-carboxylate 3-dehydrogenase ERG26 and the 3-keto-steroid reductase ERG27, leads to the production of fecosterol via 4-methylfecosterol. ERG28 has a role as a scaffold to help anchor ERG25, ERG26 and ERG27 to the endoplasmic reticulum. The C-8 sterol isomerase ERG2 then catalyzes the reaction which results in unsaturation at C-7 in the B ring of sterols and thus converts fecosterol to episterol. The sterol-C5-desaturases ERG3A and ERG3BB then catalyze the introduction of a C-5 double bond in the B ring to produce 5-dehydroepisterol. The C-22 sterol desaturases ERG5A and ERG5B further convert 5-dehydroepisterol into ergosta-5,7,22,24(28)-tetraen-3beta-ol by forming the C-22(23) double bond in the sterol side chain. Finally, ergosta-5,7,22,24(28)-tetraen-3beta-ol is substrate of the C-24(28) sterol reductase ERG4 to produce ergosterol. The chain is Sterol-4-alpha-carboxylate 3-dehydrogenase ERG26, decarboxylating from Gibberella zeae (strain ATCC MYA-4620 / CBS 123657 / FGSC 9075 / NRRL 31084 / PH-1) (Wheat head blight fungus).